We begin with the raw amino-acid sequence, 192 residues long: Acetyltransferase PA3944 (192 aa).

The region spanning 18–187 (LLLRAWRDSD…RHILYRVDAA (170 aa)) is the N-acetyltransferase domain. Residues 105–107 (WRL), Gly113, Asn145, and 150–152 (GLM) each bind CoA.

Its function is as follows. Catalyzes the transfer of an acetyl group from acetyl coenzyme A (AcCoA) to an acceptor substrate and releases both CoA and the acetylated product. It prefers the peptide Asp-Phe methyl ester (or aspartame) and the peptide antibiotics polymyxin B and colistin. Other substrates like dopamine, serotonin, puromycin, chloramphenicol, D-glucosamine, glycine and N-alpha-acetyl-L-glutamine are used and displayed lower activity. The polypeptide is Acetyltransferase PA3944 (Pseudomonas aeruginosa (strain ATCC 15692 / DSM 22644 / CIP 104116 / JCM 14847 / LMG 12228 / 1C / PRS 101 / PAO1)).